The chain runs to 199 residues: Chaperone protein TorD (199 aa).

Belongs to the TorD/DmsD family. TorD subfamily.

The protein resides in the cytoplasm. Involved in the biogenesis of TorA. Acts on TorA before the insertion of the molybdenum cofactor and, as a result, probably favors a conformation of the apoenzyme that is competent for acquiring the cofactor. In Escherichia coli O45:K1 (strain S88 / ExPEC), this protein is Chaperone protein TorD.